The chain runs to 432 residues: UDP-N-acetylmuramate--L-alanine ligase (432 aa).

108-114 (GAHGKTS) lines the ATP pocket.

Belongs to the MurCDEF family.

The protein localises to the cytoplasm. The enzyme catalyses UDP-N-acetyl-alpha-D-muramate + L-alanine + ATP = UDP-N-acetyl-alpha-D-muramoyl-L-alanine + ADP + phosphate + H(+). It participates in cell wall biogenesis; peptidoglycan biosynthesis. In terms of biological role, cell wall formation. This chain is UDP-N-acetylmuramate--L-alanine ligase, found in Bacillus licheniformis (strain ATCC 14580 / DSM 13 / JCM 2505 / CCUG 7422 / NBRC 12200 / NCIMB 9375 / NCTC 10341 / NRRL NRS-1264 / Gibson 46).